We begin with the raw amino-acid sequence, 101 residues long: Large ribosomal subunit protein eL30 (101 aa).

This sequence belongs to the eukaryotic ribosomal protein eL30 family.

This Pyrobaculum calidifontis (strain DSM 21063 / JCM 11548 / VA1) protein is Large ribosomal subunit protein eL30.